The sequence spans 501 residues: L-arabinose isomerase (501 aa).

The Mn(2+) site is built by Glu-306, Glu-333, His-350, and His-450.

It belongs to the arabinose isomerase family. In terms of assembly, homohexamer. Mn(2+) is required as a cofactor.

The catalysed reaction is beta-L-arabinopyranose = L-ribulose. The protein operates within carbohydrate degradation; L-arabinose degradation via L-ribulose; D-xylulose 5-phosphate from L-arabinose (bacterial route): step 1/3. In terms of biological role, catalyzes the conversion of L-arabinose to L-ribulose. This Pectobacterium atrosepticum (strain SCRI 1043 / ATCC BAA-672) (Erwinia carotovora subsp. atroseptica) protein is L-arabinose isomerase.